The following is a 1729-amino-acid chain: 1,3-beta-glucan synthase component bgs1 (1729 aa).

At Ser23 the chain carries Phosphoserine. A run of 6 helical transmembrane segments spans residues 378 to 398 (WTAC…AVVF), 416 to 436 (SMLL…FIFA), 448 to 468 (LVVG…YSIT), 503 to 523 (FVSW…SYFF), 546 to 566 (YILG…LLYL), and 577 to 597 (YLWY…CLGI). Residues Ser784 and Ser788 each carry the phosphoserine modification. A run of 8 helical transmembrane segments spans residues 1180–1200 (MVIM…GAMY), 1237–1257 (ILSI…CELG), 1337–1357 (MLLF…WITL), 1440–1460 (YGEI…FLFI), 1484–1504 (VAPL…GIML), 1515–1535 (YGVY…VVVF), 1550–1572 (LLGF…ICFL), and 1678–1698 (ATLY…PFVF).

The protein belongs to the glycosyltransferase 48 family. In terms of assembly, component of the 1,3-beta-glucan synthase (GS) complex, composed of at least the alternate catalytic subunits bgs1, bgs2, bgs3, and bgs4, and a regulatory subunit chr4.

The protein localises to the cell membrane. It is found in the cell septum. It carries out the reaction [(1-&gt;3)-beta-D-glucosyl](n) + UDP-alpha-D-glucose = [(1-&gt;3)-beta-D-glucosyl](n+1) + UDP + H(+). Its function is as follows. Alternate catalytic subunit of the 1,3-beta-glucan synthase (GS) complex. Synthesizes 1,3-beta-glucan, a major structural component of the fungal cell wall. Required for the assembly of the division septum and maintenance of cell polarity. In Schizosaccharomyces pombe (strain 972 / ATCC 24843) (Fission yeast), this protein is 1,3-beta-glucan synthase component bgs1 (bgs1).